Consider the following 500-residue polypeptide: MKEKYILSIDEGTTSTRAIIFDHNGNEIVSAQKEITQYFPEPGWVEHDANEIWMAVQTTIANAFIQSGIWPGQIAAIGITNQRETAVVWDKDTGKPIYHAIVWQSRQTTDLAEKLKKDGYSNLIREKTGLIVDPYFSATKIRWILDHVPGAQEKAEQGKLLFGTIDSWLVWKLTDGQKHVTDYTNASRTMLFNIHTLKWDKEILNLLNIPEKMLPEVRSNSEVYGTTASYMFFGGEVSIAGMAGDQQAALFGQLALKPGMVKNTYGTGAFIVMNTGDKPTTSNNNLLTTIGYGINGKITYALEGSIFVAGSAIQWLRDSMKLIKNAPDSEKAAYESTSENEVYVVPAFTGLGAPYWDAEARGAIFGVTRGTTDKDMIKATLQSLAYQTRDVVDTMQKDSGIDIPALRVDGGASNNNYLMQFQADILGKKIERTKVLETTSMGAAFLAGLAVGYWKNIDELKHVFTIGQAFEPKMGDLERKKLYDGWQRAIKATRVFAHGE.

Residue Thr-13 coordinates ADP. The ATP site is built by Thr-13, Thr-14, and Ser-15. A sn-glycerol 3-phosphate-binding site is contributed by Thr-13. Arg-17 is an ADP binding site. Sn-glycerol 3-phosphate contacts are provided by Arg-83, Glu-84, Tyr-135, and Asp-245. Glycerol contacts are provided by Arg-83, Glu-84, Tyr-135, Asp-245, and Gln-246. The ADP site is built by Thr-267 and Gly-310. Residues Thr-267, Gly-310, Gln-314, and Gly-411 each coordinate ATP. ADP is bound by residues Gly-411 and Asn-415.

Belongs to the FGGY kinase family. Homotetramer and homodimer (in equilibrium).

The catalysed reaction is glycerol + ATP = sn-glycerol 3-phosphate + ADP + H(+). Its pathway is polyol metabolism; glycerol degradation via glycerol kinase pathway; sn-glycerol 3-phosphate from glycerol: step 1/1. With respect to regulation, activated by phosphorylation and inhibited by fructose 1,6-bisphosphate (FBP). Functionally, key enzyme in the regulation of glycerol uptake and metabolism. Catalyzes the phosphorylation of glycerol to yield sn-glycerol 3-phosphate. This is Glycerol kinase from Lactobacillus acidophilus (strain ATCC 700396 / NCK56 / N2 / NCFM).